A 265-amino-acid polypeptide reads, in one-letter code: U6 snRNA phosphodiesterase 1 (265 aa).

A disordered region spans residues 1 to 22; that stretch reads MSLVCYESSSSGEDDDETISDN. His-109 acts as the Proton acceptor in catalysis. Residues 109–111 and 195–201 contribute to the AMP site; these read HLS and DFLLHIS. Residue 197-201 coordinates UMP; the sequence is LLHIS. His-199 functions as the Proton donor in the catalytic mechanism.

This sequence belongs to the 2H phosphoesterase superfamily. USB1 family.

It is found in the nucleus. The catalysed reaction is a 3'-end uridylyl-uridine-RNA = a 3'-end 2',3'-cyclophospho-uridine-RNA + uridine. In terms of biological role, 3'-5' RNA exonuclease that trims the 3' end of oligo(U) tracts of the pre-U6 small nuclear RNA (snRNA) molecule, leading to the formation of a U6 snRNA 3' end-terminated with a 2',3'-cyclic phosphate.d. Participates in the U6 snRNA 3' end processing that prevents U6 snRNA degradation. The protein is U6 snRNA phosphodiesterase 1 of Schizosaccharomyces pombe (strain 972 / ATCC 24843) (Fission yeast).